The following is a 295-amino-acid chain: sn-glycerol-3-phosphate transport system permease protein UgpA (295 aa).

The Cytoplasmic segment spans residues 1–11 (MSSSRPVFRSR). The helical transmembrane segment at 12–32 (WLPYLLVAPQLIITVIFFIWP) threads the bilayer. The Periplasmic portion of the chain corresponds to 33–80 (AGEALWYSLQSVDPFGFSSQFVGLDNFVTLFHDSYYLDAFWTTIKFST). The ABC transmembrane type-1 domain maps to 76–284 (IKFSTFVTVS…FLVIVLTVVQ (209 aa)). Residues 81 to 101 (FVTVSGLLVSLFFAALVEYIV) traverse the membrane as a helical segment. The Cytoplasmic portion of the chain corresponds to 102–109 (RGSRFYQT). Residues 110-130 (LMLLPYAVAPAVAAVLWIFLF) traverse the membrane as a helical segment. The Periplasmic portion of the chain corresponds to 131–156 (NPGRGLITHFLAEFGYDWNHAQNSGQ). The helical transmembrane segment at 157–177 (AMFLVVFASVWKQISYNFLFF) threads the bilayer. Residues 178–207 (YAALQSIPRSLIEAAAIDGAGPIRRFFKIA) are Cytoplasmic-facing. Residues 208–228 (LPLIAPVSFFLLVVNLVYAFF) form a helical membrane-spanning segment. Residues 229–262 (DTFPVIDAATSGGPVQATTTLIYKIYREGFTGLD) lie on the Periplasmic side of the membrane. The helical transmembrane segment at 263-283 (LASSAAQSVVLMFLVIVLTVV) threads the bilayer. The Cytoplasmic portion of the chain corresponds to 284-295 (QFRYVESKVRYQ).

It belongs to the binding-protein-dependent transport system permease family. UgpAE subfamily. The complex is composed of two ATP-binding proteins (UgpC), two transmembrane proteins (UgpA and UgpE) and a solute-binding protein (UgpB).

It localises to the cell inner membrane. Part of the ABC transporter complex UgpBAEC involved in sn-glycerol-3-phosphate (G3P) import. Probably responsible for the translocation of the substrate across the membrane. The chain is sn-glycerol-3-phosphate transport system permease protein UgpA (ugpA) from Escherichia coli (strain UTI89 / UPEC).